The following is a 452-amino-acid chain: UPF0210 protein CHY_1509 (452 aa).

Belongs to the UPF0210 family. As to quaternary structure, homodimer.

The sequence is that of UPF0210 protein CHY_1509 from Carboxydothermus hydrogenoformans (strain ATCC BAA-161 / DSM 6008 / Z-2901).